Consider the following 681-residue polypeptide: Probable L-type lectin-domain containing receptor kinase S.7 (681 aa).

Residues Met-1–Ser-21 form the signal peptide. The Extracellular portion of the chain corresponds to Lys-22–Asn-305. A legume-lectin like region spans residues Asn-30–Lys-265. Asn-32, Asn-42, Asn-86, Asn-121, Asn-135, Asn-261, and Asn-281 each carry an N-linked (GlcNAc...) asparagine glycan. A helical transmembrane segment spans residues Leu-306–Gly-326. Residues Tyr-327–Ser-681 are Cytoplasmic-facing. In terms of domain architecture, Protein kinase spans Phe-365–Ile-643. ATP-binding positions include Ile-371–Val-379 and Lys-394. Catalysis depends on Asp-493, which acts as the Proton acceptor.

It in the C-terminal section; belongs to the protein kinase superfamily. Ser/Thr protein kinase family. In the N-terminal section; belongs to the leguminous lectin family.

It localises to the cell membrane. It catalyses the reaction L-seryl-[protein] + ATP = O-phospho-L-seryl-[protein] + ADP + H(+). The catalysed reaction is L-threonyl-[protein] + ATP = O-phospho-L-threonyl-[protein] + ADP + H(+). Its function is as follows. Involved in resistance response to the pathogenic oomycetes Phytophthora infestans and Phytophthora capsici. This is Probable L-type lectin-domain containing receptor kinase S.7 from Arabidopsis thaliana (Mouse-ear cress).